A 519-amino-acid chain; its full sequence is Sodium-dependent dicarboxylate transporter SdcS (519 aa).

The next 14 membrane-spanning stretches (helical) occupy residues Val29–Phe49, Val59–Ile79, Ala103–Met123, Ile136–Gly156, Ser159–Ile179, Ala201–Thr221, Phe241–Ile261, Lys297–Leu317, Phe322–Ile342, Leu362–Glu382, Leu395–Leu415, Ile428–Val448, Ala451–Phe471, and Leu490–Ile510.

The protein belongs to the SLC13A/DASS transporter (TC 2.A.47) family. NADC subfamily.

The protein localises to the cell membrane. Mediates the transport of dicarboxylates across the cytoplasmic membrane via a Na(+)-electrochemical gradient. This chain is Sodium-dependent dicarboxylate transporter SdcS (sdcS), found in Staphylococcus saprophyticus subsp. saprophyticus (strain ATCC 15305 / DSM 20229 / NCIMB 8711 / NCTC 7292 / S-41).